The following is a 232-amino-acid chain: Adenosylcobinamide-GDP ribazoletransferase (232 aa).

The next 7 helical transmembrane spans lie at 24–44 (LWAFPLVSLVSSIIPIAILYL), 46–66 (IPLANVLALLSLYFVIGLLHL), 96–116 (IAGVFAVVVVLFLQVYSLSML), 117–137 (PFYAIYIAELNSKFSMLLGLA), 153–173 (GMNGRQLAIGVVLYVLLYLPV), 174–194 (VIYDPSALFGVMGLVFAWYVI), and 210–230 (GAMAEITRAGTLVILSFSLCF).

It belongs to the CobS family. Requires Mg(2+) as cofactor.

It localises to the cell membrane. The catalysed reaction is alpha-ribazole + adenosylcob(III)inamide-GDP = adenosylcob(III)alamin + GMP + H(+). The enzyme catalyses alpha-ribazole 5'-phosphate + adenosylcob(III)inamide-GDP = adenosylcob(III)alamin 5'-phosphate + GMP + H(+). It functions in the pathway cofactor biosynthesis; adenosylcobalamin biosynthesis; adenosylcobalamin from cob(II)yrinate a,c-diamide: step 7/7. Functionally, joins adenosylcobinamide-GDP and alpha-ribazole to generate adenosylcobalamin (Ado-cobalamin). Also synthesizes adenosylcobalamin 5'-phosphate from adenosylcobinamide-GDP and alpha-ribazole 5'-phosphate. This chain is Adenosylcobinamide-GDP ribazoletransferase, found in Pyrococcus abyssi (strain GE5 / Orsay).